We begin with the raw amino-acid sequence, 342 residues long: Methionyl-tRNA formyltransferase (342 aa).

110–113 lines the (6S)-5,6,7,8-tetrahydrofolate pocket; sequence SLLP.

This sequence belongs to the Fmt family.

The enzyme catalyses L-methionyl-tRNA(fMet) + (6R)-10-formyltetrahydrofolate = N-formyl-L-methionyl-tRNA(fMet) + (6S)-5,6,7,8-tetrahydrofolate + H(+). Attaches a formyl group to the free amino group of methionyl-tRNA(fMet). The formyl group appears to play a dual role in the initiator identity of N-formylmethionyl-tRNA by promoting its recognition by IF2 and preventing the misappropriation of this tRNA by the elongation apparatus. The polypeptide is Methionyl-tRNA formyltransferase (Synechococcus sp. (strain CC9311)).